Reading from the N-terminus, the 315-residue chain is Porphobilinogen deaminase (315 aa).

Cysteine 251 is subject to S-(dipyrrolylmethanemethyl)cysteine.

Belongs to the HMBS family. In terms of assembly, monomer. Dipyrromethane serves as cofactor.

It carries out the reaction 4 porphobilinogen + H2O = hydroxymethylbilane + 4 NH4(+). It functions in the pathway porphyrin-containing compound metabolism; protoporphyrin-IX biosynthesis; coproporphyrinogen-III from 5-aminolevulinate: step 2/4. In terms of biological role, tetrapolymerization of the monopyrrole PBG into the hydroxymethylbilane pre-uroporphyrinogen in several discrete steps. The chain is Porphobilinogen deaminase from Sphingopyxis alaskensis (strain DSM 13593 / LMG 18877 / RB2256) (Sphingomonas alaskensis).